A 63-amino-acid polypeptide reads, in one-letter code: Large ribosomal subunit protein bL28 (63 aa).

Belongs to the bacterial ribosomal protein bL28 family.

The protein is Large ribosomal subunit protein bL28 of Heliobacterium modesticaldum (strain ATCC 51547 / Ice1).